The primary structure comprises 812 residues: Probable inorganic carbon transporter subunit DabA (812 aa).

Zn(2+) is bound by residues Cys-337, Asp-339, His-499, and Cys-514.

Belongs to the inorganic carbon transporter (TC 9.A.2) DabA family. Forms a complex with DabB. It depends on Zn(2+) as a cofactor.

The protein localises to the cell inner membrane. In terms of biological role, part of an energy-coupled inorganic carbon pump. This Xanthomonas oryzae pv. oryzae (strain MAFF 311018) protein is Probable inorganic carbon transporter subunit DabA.